Here is a 152-residue protein sequence, read N- to C-terminus: Lipoprotein signal peptidase (152 aa).

2 helical membrane-spanning segments follow: residues 55-75 (NKMWFFYIITVVFVVFIVFYM) and 85-105 (LGISLGLILGGAIGNFIDRVF). Residues Asp-111 and Asp-129 contribute to the active site. Residues 124–144 (VFNIADSALCIGVVLIIIQTL) traverse the membrane as a helical segment.

The protein belongs to the peptidase A8 family.

It is found in the cell membrane. The enzyme catalyses Release of signal peptides from bacterial membrane prolipoproteins. Hydrolyzes -Xaa-Yaa-Zaa-|-(S,diacylglyceryl)Cys-, in which Xaa is hydrophobic (preferably Leu), and Yaa (Ala or Ser) and Zaa (Gly or Ala) have small, neutral side chains.. The protein operates within protein modification; lipoprotein biosynthesis (signal peptide cleavage). In terms of biological role, this protein specifically catalyzes the removal of signal peptides from prolipoproteins. In Bacillus cereus (strain ZK / E33L), this protein is Lipoprotein signal peptidase.